Reading from the N-terminus, the 65-residue chain is MFLTTANLAKAKSKTILVQMVSAAGTGYFFNTKRNRLRDKLVLRKHDPVVNKHVLFFEKKKIRSI.

The transit peptide at 1–8 directs the protein to the mitochondrion; sequence MFLTTANL.

This sequence belongs to the bacterial ribosomal protein bL33 family. As to quaternary structure, component of the mitochondrial ribosome large subunit (39S) which comprises a 16S rRNA and about 50 distinct proteins.

The protein resides in the mitochondrion. This Tetraodon nigroviridis (Spotted green pufferfish) protein is Large ribosomal subunit protein bL33m (mrpl33).